We begin with the raw amino-acid sequence, 577 residues long: Moesin (577 aa).

The region spanning 2 to 295 (PKTINVRVTT…GNHELYMRRR (294 aa)) is the FERM domain. At serine 74 the chain carries Phosphoserine. An N6-acetyllysine modification is found at lysine 79. The residue at position 83 (lysine 83) is an N6-succinyllysine. Residues 115 to 120 (IYCPPE) carry the [IL]-x-C-x-x-[DE] motif motif. Tyrosine 116 is subject to Phosphotyrosine. S-nitrosocysteine is present on cysteine 117. Residues lysine 139 and lysine 165 each carry the N6-acetyllysine modification. A compositionally biased stretch (basic and acidic residues) spans 376–414 (EQERKRAQSEAEKLAKERQEAEEAKEALLKASRDQKKTQ). Disordered regions lie at residues 376–415 (EQERKRAQSEAEKLAKERQEAEEAKEALLKASRDQKKTQE) and 434–518 (ARQK…NERV). At serine 407 the chain carries Phosphoserine. Acidic residues predominate over residues 476–487 (AENDQDEQDENG). The span at 492-518 (ADLRADAMAKDRSEEERTTEAEKNERV) shows a compositional bias: basic and acidic residues. Serine 527 bears the Phosphoserine mark. Phosphothreonine; by ROCK2 and STK10 is present on threonine 558.

As to quaternary structure, binds NHERF1. In resting T-cells, part of a PAG1-NHERF1-MSN complex which is disrupted upon TCR activation. Interacts with PPP1R16B. Interacts with PDZD8. Interacts with SELPLG and SYK; mediates the activation of SYK by SELPLG. Interacts with PDPN (via cytoplasmic domain); activates RHOA and promotes epithelial-mesenchymal transition. Interacts with SPN/CD43 cytoplasmic tail, CD44 and ICAM2. In terms of processing, phosphorylation on Thr-558 is crucial for the formation of microvilli-like structures. Phosphorylation by ROCK2 suppresses the head-to-tail association of the N-terminal and C-terminal halves resulting in an opened conformation which is capable of actin and membrane-binding. Phosphorylation on Thr-558 by STK10 negatively regulates lymphocyte migration and polarization. S-nitrosylation of Cys-117 is induced by interferon-gamma and oxidatively-modified low-densitity lipoprotein (LDL(ox)) implicating the iNOS-S100A8/9 transnitrosylase complex.

Its subcellular location is the cell membrane. It localises to the cytoplasm. The protein resides in the cytoskeleton. It is found in the apical cell membrane. The protein localises to the cell projection. Its subcellular location is the microvillus membrane. It localises to the microvillus. A head-to-tail association, of the N-terminal and C-terminal halves results in a closed conformation (inactive form) which is incapable of actin or membrane-binding. Probably involved in connections of major cytoskeletal structures to the plasma membrane. Plays a role in regulating the proliferation, migration, and adhesion of human lymphoid cells and participates in immunologic synapse formation. The chain is Moesin from Sus scrofa (Pig).